We begin with the raw amino-acid sequence, 379 residues long: Protein-glutamate methylesterase/protein-glutamine glutaminase (379 aa).

Residues 4 to 121 enclose the Response regulatory domain; that stretch reads KVLVVDDSSF…AKNSDEAGSL (118 aa). Asp55 is subject to 4-aspartylphosphate. The region spanning 185 to 379 is the CheB-type methylesterase domain; that stretch reads SGKEYKLLAI…ASMVKEISRG (195 aa). Active-site residues include Ser197, His224, and Asp321.

The protein belongs to the CheB family. In terms of processing, phosphorylated by CheA. Phosphorylation of the N-terminal regulatory domain activates the methylesterase activity.

Its subcellular location is the cytoplasm. The catalysed reaction is [protein]-L-glutamate 5-O-methyl ester + H2O = L-glutamyl-[protein] + methanol + H(+). It catalyses the reaction L-glutaminyl-[protein] + H2O = L-glutamyl-[protein] + NH4(+). In terms of biological role, involved in chemotaxis. Part of a chemotaxis signal transduction system that modulates chemotaxis in response to various stimuli. Catalyzes the demethylation of specific methylglutamate residues introduced into the chemoreceptors (methyl-accepting chemotaxis proteins or MCP) by CheR. Also mediates the irreversible deamidation of specific glutamine residues to glutamic acid. The chain is Protein-glutamate methylesterase/protein-glutamine glutaminase from Colwellia psychrerythraea (strain 34H / ATCC BAA-681) (Vibrio psychroerythus).